Here is a 247-residue protein sequence, read N- to C-terminus: HTH-type transcriptional regulator SarU (247 aa).

2 DNA-binding regions (H-T-H motif) span residues 53 to 76 (LKEI…SLSK) and 178 to 201 (LKDL…RLNN).

The protein belongs to the SarA family.

It localises to the cytoplasm. Its function is as follows. Positive regulator of RNAII and RNAIII in a cell density-dependent manner. It can contribute to the expression of virulence genes controlled by agr. May also regulate target genes via an agr-independent pathway. The protein is HTH-type transcriptional regulator SarU (sarU) of Staphylococcus aureus (strain NCTC 8325 / PS 47).